The chain runs to 217 residues: Small ribosomal subunit protein uS3 (217 aa).

One can recognise a KH type-2 domain in the interval 40–110; that stretch reads IRDLINNSFN…EVYINIHEVR (71 aa).

The protein belongs to the universal ribosomal protein uS3 family. Part of the 30S ribosomal subunit. Forms a tight complex with proteins S10 and S14.

Functionally, binds the lower part of the 30S subunit head. Binds mRNA in the 70S ribosome, positioning it for translation. This Rickettsia canadensis (strain McKiel) protein is Small ribosomal subunit protein uS3.